Consider the following 309-residue polypeptide: Succinate--CoA ligase [ADP-forming] subunit alpha-2, mitochondrial (309 aa).

The transit peptide at 1–9 (MLSSSFERN) directs the protein to the hydrogenosome. CoA-binding positions include lysine 54 and 107-109 (ITE). Tyrosine 171 contacts substrate. The active-site Tele-phosphohistidine intermediate is histidine 262.

It belongs to the succinate/malate CoA ligase alpha subunit family. Heterodimer of an alpha and a beta subunit.

The protein resides in the hydrogenosome lumen. The catalysed reaction is succinate + ATP + CoA = succinyl-CoA + ADP + phosphate. It functions in the pathway carbohydrate metabolism; tricarboxylic acid cycle; succinate from succinyl-CoA (ligase route): step 1/1. In terms of biological role, succinyl-CoA synthetase functions in the citric acid cycle (TCA), coupling the hydrolysis of succinyl-CoA to the synthesis of ATP and thus represents the only step of substrate-level phosphorylation in the TCA. The alpha subunit of the enzyme binds the substrates coenzyme A and phosphate, while succinate binding and nucleotide specificity is provided by the beta subunit. This is Succinate--CoA ligase [ADP-forming] subunit alpha-2, mitochondrial (ALPHA-SCS2) from Trichomonas vaginalis.